A 216-amino-acid polypeptide reads, in one-letter code: Protein-L-isoaspartate O-methyltransferase (216 aa).

Ser-62 is a catalytic residue.

This sequence belongs to the methyltransferase superfamily. L-isoaspartyl/D-aspartyl protein methyltransferase family.

Its subcellular location is the cytoplasm. It catalyses the reaction [protein]-L-isoaspartate + S-adenosyl-L-methionine = [protein]-L-isoaspartate alpha-methyl ester + S-adenosyl-L-homocysteine. In terms of biological role, catalyzes the methyl esterification of L-isoaspartyl residues in peptides and proteins that result from spontaneous decomposition of normal L-aspartyl and L-asparaginyl residues. It plays a role in the repair and/or degradation of damaged proteins. The protein is Protein-L-isoaspartate O-methyltransferase of Methanospirillum hungatei JF-1 (strain ATCC 27890 / DSM 864 / NBRC 100397 / JF-1).